The primary structure comprises 646 residues: Nucleoside triphosphatase I (646 aa).

Residues 48 to 213 (FIGLKNLNSM…NNLIGLLRPN (166 aa)) enclose the Helicase ATP-binding domain. 61–68 (WDTGMGKT) contacts ATP. A DEXH box motif is present at residues 151-154 (DEVH). The region spanning 377–540 (YIEACRIILN…KINVVFDLLK (164 aa)) is the Helicase C-terminal domain. The tract at residues 466 to 532 (DIIILDMPWN…DIIKDKQSKI (67 aa)) is binding to the cap-specific mRNA (nucleoside-2'-O-)-methyltransferase.

Belongs to the helicase family. NPH I subfamily. Monomer. Interacts (via C-terminus) with RAP94 (via N-terminus). Interacts with the cap-specific mRNA (nucleoside-2'-O-)-methyltransferase.

It localises to the virion. The enzyme catalyses a ribonucleoside 5'-triphosphate + H2O = a ribonucleoside 5'-diphosphate + phosphate + H(+). Its function is as follows. DNA-dependent ATPase required for providing the needed energy to achieve the termination of early transcripts. Acts in concert with the RAP94 subunit of the virion RNA polymerase and the capping enzyme/VTF to catalyze release of UUUUUNU-containing nascent RNA from the elongation complex. NPH-I must bind ssDNA in order to exhibit ATPase activity. The polypeptide is Nucleoside triphosphatase I (NPH1) (Heliothis armigera entomopoxvirus (HaEPV)).